A 213-amino-acid chain; its full sequence is Protein-L-isoaspartate O-methyltransferase (213 aa).

S60 is an active-site residue.

The protein belongs to the methyltransferase superfamily. L-isoaspartyl/D-aspartyl protein methyltransferase family.

It is found in the cytoplasm. The catalysed reaction is [protein]-L-isoaspartate + S-adenosyl-L-methionine = [protein]-L-isoaspartate alpha-methyl ester + S-adenosyl-L-homocysteine. Functionally, catalyzes the methyl esterification of L-isoaspartyl residues in peptides and proteins that result from spontaneous decomposition of normal L-aspartyl and L-asparaginyl residues. It plays a role in the repair and/or degradation of damaged proteins. The chain is Protein-L-isoaspartate O-methyltransferase from Roseobacter denitrificans (strain ATCC 33942 / OCh 114) (Erythrobacter sp. (strain OCh 114)).